The following is a 188-amino-acid chain: Elongation factor P (188 aa).

Residue K34 is modified to N6-(3,6-diaminohexanoyl)-5-hydroxylysine.

Belongs to the elongation factor P family. Post-translationally, may be beta-lysylated on the epsilon-amino group of Lys-34 by the combined action of EpmA and EpmB, and then hydroxylated on the C5 position of the same residue by EpmC (if this protein is present). Lysylation is critical for the stimulatory effect of EF-P on peptide-bond formation. The lysylation moiety may extend toward the peptidyltransferase center and stabilize the terminal 3-CCA end of the tRNA. Hydroxylation of the C5 position on Lys-34 may allow additional potential stabilizing hydrogen-bond interactions with the P-tRNA.

The protein resides in the cytoplasm. The protein operates within protein biosynthesis; polypeptide chain elongation. Its function is as follows. Involved in peptide bond synthesis. Alleviates ribosome stalling that occurs when 3 or more consecutive Pro residues or the sequence PPG is present in a protein, possibly by augmenting the peptidyl transferase activity of the ribosome. Modification of Lys-34 is required for alleviation. The sequence is that of Elongation factor P from Serratia proteamaculans (strain 568).